Reading from the N-terminus, the 325-residue chain is Acetyl-coenzyme A carboxylase carboxyl transferase subunit alpha (325 aa).

Residues 44-298 (QLEGRAEQLR…KTAILSNLEE (255 aa)) enclose the CoA carboxyltransferase C-terminal domain.

Belongs to the AccA family. In terms of assembly, acetyl-CoA carboxylase is a heterohexamer composed of biotin carboxyl carrier protein (AccB), biotin carboxylase (AccC) and two subunits each of ACCase subunit alpha (AccA) and ACCase subunit beta (AccD).

It localises to the cytoplasm. It catalyses the reaction N(6)-carboxybiotinyl-L-lysyl-[protein] + acetyl-CoA = N(6)-biotinyl-L-lysyl-[protein] + malonyl-CoA. It functions in the pathway lipid metabolism; malonyl-CoA biosynthesis; malonyl-CoA from acetyl-CoA: step 1/1. Its function is as follows. Component of the acetyl coenzyme A carboxylase (ACC) complex. First, biotin carboxylase catalyzes the carboxylation of biotin on its carrier protein (BCCP) and then the CO(2) group is transferred by the carboxyltransferase to acetyl-CoA to form malonyl-CoA. In Acaryochloris marina (strain MBIC 11017), this protein is Acetyl-coenzyme A carboxylase carboxyl transferase subunit alpha.